The sequence spans 754 residues: Ribosomal RNA large subunit methyltransferase K/L (754 aa).

In terms of domain architecture, THUMP spans 46 to 157 (TAYRLCLWSR…RGEAILSLDL (112 aa)).

The protein belongs to the methyltransferase superfamily. RlmKL family.

The protein resides in the cytoplasm. The catalysed reaction is guanosine(2445) in 23S rRNA + S-adenosyl-L-methionine = N(2)-methylguanosine(2445) in 23S rRNA + S-adenosyl-L-homocysteine + H(+). The enzyme catalyses guanosine(2069) in 23S rRNA + S-adenosyl-L-methionine = N(2)-methylguanosine(2069) in 23S rRNA + S-adenosyl-L-homocysteine + H(+). Functionally, specifically methylates the guanine in position 2445 (m2G2445) and the guanine in position 2069 (m7G2069) of 23S rRNA. The sequence is that of Ribosomal RNA large subunit methyltransferase K/L from Pseudomonas fluorescens (strain ATCC BAA-477 / NRRL B-23932 / Pf-5).